Reading from the N-terminus, the 210-residue chain is NAD(P)H-quinone oxidoreductase subunit I (210 aa).

2 consecutive 4Fe-4S ferredoxin-type domains span residues 54-83 (GRIH…VDWA) and 94-123 (YSYS…VTED). Residues cysteine 63, cysteine 66, cysteine 69, cysteine 73, cysteine 103, cysteine 106, cysteine 109, and cysteine 113 each coordinate [4Fe-4S] cluster.

The protein belongs to the complex I 23 kDa subunit family. In terms of assembly, NDH-1 is composed of at least 11 different subunits. [4Fe-4S] cluster is required as a cofactor.

It localises to the cellular thylakoid membrane. The catalysed reaction is a plastoquinone + NADH + (n+1) H(+)(in) = a plastoquinol + NAD(+) + n H(+)(out). It catalyses the reaction a plastoquinone + NADPH + (n+1) H(+)(in) = a plastoquinol + NADP(+) + n H(+)(out). In terms of biological role, NDH-1 shuttles electrons from an unknown electron donor, via FMN and iron-sulfur (Fe-S) centers, to quinones in the respiratory and/or the photosynthetic chain. The immediate electron acceptor for the enzyme in this species is believed to be plastoquinone. Couples the redox reaction to proton translocation, and thus conserves the redox energy in a proton gradient. The protein is NAD(P)H-quinone oxidoreductase subunit I of Synechococcus sp. (strain JA-2-3B'a(2-13)) (Cyanobacteria bacterium Yellowstone B-Prime).